Reading from the N-terminus, the 218-residue chain is Small ribosomal subunit protein uS3 (218 aa).

Positions 40-109 constitute a KH type-2 domain; that stretch reads IRKIINTEYS…DVSINIREVK (70 aa).

This sequence belongs to the universal ribosomal protein uS3 family. In terms of assembly, part of the 30S ribosomal subunit. Forms a tight complex with proteins S10 and S14.

Its function is as follows. Binds the lower part of the 30S subunit head. Binds mRNA in the 70S ribosome, positioning it for translation. The sequence is that of Small ribosomal subunit protein uS3 from Orientia tsutsugamushi (strain Boryong) (Rickettsia tsutsugamushi).